Consider the following 168-residue polypeptide: 2-oxo-4-hydroxy-4-carboxy-5-ureidoimidazoline decarboxylase (168 aa).

Histidine 70 functions as the Proton donor; for OHCU decarboxylase activity in the catalytic mechanism. Over residues 70–79 (HPDLGERTEM) the composition is skewed to basic and acidic residues. The segment at 70 to 93 (HPDLGERTEMTDASEAEQASAELD) is disordered. Substrate is bound by residues proline 71, 83-87 (SEAEQ), and 118-122 (FVMAV).

The protein belongs to the OHCU decarboxylase family.

The enzyme catalyses 5-hydroxy-2-oxo-4-ureido-2,5-dihydro-1H-imidazole-5-carboxylate + H(+) = (S)-allantoin + CO2. The protein operates within purine metabolism; urate degradation; (S)-allantoin from urate: step 3/3. Its function is as follows. Catalyzes the stereoselective decarboxylation of 2-oxo-4-hydroxy-4-carboxy-5-ureidoimidazoline (OHCU) to (S)-allantoin. The protein is 2-oxo-4-hydroxy-4-carboxy-5-ureidoimidazoline decarboxylase of Haloferax volcanii (strain ATCC 29605 / DSM 3757 / JCM 8879 / NBRC 14742 / NCIMB 2012 / VKM B-1768 / DS2) (Halobacterium volcanii).